The sequence spans 65 residues: Large ribosomal subunit protein bL35 (65 aa).

The protein belongs to the bacterial ribosomal protein bL35 family.

The chain is Large ribosomal subunit protein bL35 from Borrelia turicatae (strain 91E135).